The sequence spans 627 residues: Carene synthase, chloroplastic (627 aa).

Residues 1 to 36 constitute a chloroplast transit peptide; that stretch reads MSVISILPLASKSCLYKSLMSSTHELKALCRPIATL. The Mg(2+) site is built by aspartate 378, aspartate 382, and aspartate 530. Positions 378–382 match the DDXXD motif motif; it reads DDMYD.

It belongs to the terpene synthase family. Tpsd subfamily. Mg(2+) is required as a cofactor. The cofactor is Mn(2+).

It localises to the plastid. It is found in the chloroplast. The enzyme catalyses (2E)-geranyl diphosphate = (+)-car-3-ene + diphosphate. Its pathway is terpene metabolism; oleoresin biosynthesis. Its function is as follows. Terpene synthase (TPS) involved in defensive oleoresin formation in conifers in response to insect attack or other injury. This is Carene synthase, chloroplastic (JF67) from Picea abies (Norway spruce).